A 299-amino-acid chain; its full sequence is MKPDAHHVKQFLLRLQDDICQKLSAVDGANFVEDSWRREAGGGGRSRVLRNGGIFEQAGVNFSHVHGDAMPASATAHRPELAGRSFEAMGVSLVVHPHNPYIPTSHANVRFFIAEKPGADPVWWFGGGLDLTPYYGFEEDAVHWHRTARDLCQPFGDNVYPRYKKWCDDYFFLKHRNEQRGIGGLFFDDLNTPDFDHCFAFMQAVGNGYTEAYLPIVERRKAMVWGERERNFQLYRRGRYVEFNLVWDRGTLFGLQTGGRTESILMSMPPLVRWEYDWQPEAGSPEAALSEFIQVRDWI.

A substrate-binding site is contributed by S92. The a divalent metal cation site is built by H96 and H106. Catalysis depends on H106, which acts as the Proton donor. N108–R110 contacts substrate. Residues H145 and H175 each coordinate a divalent metal cation. The interval Y240–E275 is important for dimerization. G258–R260 is a binding site for substrate.

It belongs to the aerobic coproporphyrinogen-III oxidase family. Homodimer. A divalent metal cation is required as a cofactor.

The protein localises to the cytoplasm. The catalysed reaction is coproporphyrinogen III + O2 + 2 H(+) = protoporphyrinogen IX + 2 CO2 + 2 H2O. The protein operates within porphyrin-containing compound metabolism; protoporphyrin-IX biosynthesis; protoporphyrinogen-IX from coproporphyrinogen-III (O2 route): step 1/1. Involved in the heme biosynthesis. Catalyzes the aerobic oxidative decarboxylation of propionate groups of rings A and B of coproporphyrinogen-III to yield the vinyl groups in protoporphyrinogen-IX. The sequence is that of Oxygen-dependent coproporphyrinogen-III oxidase from Salmonella enteritidis PT4 (strain P125109).